Here is a 101-residue protein sequence, read N- to C-terminus: MNLSLREIQKLLVTVAADVARRRLARGLKLNYSEAVALITDHVVEGARDGKLVADLMQSAREVLRVDQVMEGVDTMVGIIQVEVTFPDGTKLVSVHSPIYK.

This sequence belongs to the urease gamma subunit family. As to quaternary structure, heterotrimer of UreA (gamma), UreB (beta) and UreC (alpha) subunits. Three heterotrimers associate to form the active enzyme.

The protein resides in the cytoplasm. The enzyme catalyses urea + 2 H2O + H(+) = hydrogencarbonate + 2 NH4(+). It participates in nitrogen metabolism; urea degradation; CO(2) and NH(3) from urea (urease route): step 1/1. In Ureaplasma urealyticum (Ureaplasma urealyticum biotype 2), this protein is Urease subunit gamma.